A 306-amino-acid polypeptide reads, in one-letter code: Acetyl-coenzyme A carboxylase carboxyl transferase subunit beta (306 aa).

The CoA carboxyltransferase N-terminal domain occupies 27–296 (LWHKCPSCEA…PRFVAPVIEP (270 aa)). Residues C31, C34, C50, and C53 each coordinate Zn(2+). The segment at 31–53 (CPSCEAVLYRPELEKTLDVCPKC) adopts a C4-type zinc-finger fold.

Belongs to the AccD/PCCB family. As to quaternary structure, acetyl-CoA carboxylase is a heterohexamer composed of biotin carboxyl carrier protein (AccB), biotin carboxylase (AccC) and two subunits each of ACCase subunit alpha (AccA) and ACCase subunit beta (AccD). Zn(2+) is required as a cofactor.

It localises to the cytoplasm. The enzyme catalyses N(6)-carboxybiotinyl-L-lysyl-[protein] + acetyl-CoA = N(6)-biotinyl-L-lysyl-[protein] + malonyl-CoA. Its pathway is lipid metabolism; malonyl-CoA biosynthesis; malonyl-CoA from acetyl-CoA: step 1/1. Its function is as follows. Component of the acetyl coenzyme A carboxylase (ACC) complex. Biotin carboxylase (BC) catalyzes the carboxylation of biotin on its carrier protein (BCCP) and then the CO(2) group is transferred by the transcarboxylase to acetyl-CoA to form malonyl-CoA. This Pseudomonas syringae pv. syringae (strain B728a) protein is Acetyl-coenzyme A carboxylase carboxyl transferase subunit beta.